Reading from the N-terminus, the 80-residue chain is Putative UPF0377 protein YMR324C (80 aa).

A helical membrane pass occupies residues 13 to 33 (ACIFIDSVCEGIVFWGLCLFV).

This sequence belongs to the UPF0377 family.

It is found in the membrane. The sequence is that of Putative UPF0377 protein YMR324C from Saccharomyces cerevisiae (strain ATCC 204508 / S288c) (Baker's yeast).